The sequence spans 376 residues: MKILADENMPYVQQLFGDLGTIETVNGRELTPEQVKDADVLLVRSVTKVDQALLAENNRLKFVGSATIGTDHIDLDYLASHNIPFSNAPGCNATAVGEFAFIAMLELAQRFNSPLKGKVVGIVGAGNTGTAVVKCLEAYGIEVLLNDPLLEQSGDPRDFVSLDTLIEKCDVISLHVPITKTGEHKTWYLFDEQRLNSLAENTWLVNCCRGEVIDNRALIKFKQQRDDVKVVLDVWEGEPNPMPELVPYVEFCTPHIAGYSLEGKARGTYILYQKLAEVLQISADKQMESLLPALWSERVLVQEISDERALLQLARFVYDLRDDDELFRKQFLNNQGFDHMRKNHTHRREFSALKVGNTGQTNVNWLSNLGFSGVEL.

Substrate is bound by residues serine 45 and threonine 67. Aspartate 147 provides a ligand contact to NAD(+). Residue arginine 209 is part of the active site. Aspartate 233 provides a ligand contact to NAD(+). Residue glutamate 238 is part of the active site. The active-site Proton donor is the histidine 255. NAD(+) is bound at residue glycine 258. Tyrosine 259 serves as a coordination point for substrate.

It belongs to the D-isomer specific 2-hydroxyacid dehydrogenase family. PdxB subfamily. In terms of assembly, homodimer.

The protein localises to the cytoplasm. It carries out the reaction 4-phospho-D-erythronate + NAD(+) = (R)-3-hydroxy-2-oxo-4-phosphooxybutanoate + NADH + H(+). The protein operates within cofactor biosynthesis; pyridoxine 5'-phosphate biosynthesis; pyridoxine 5'-phosphate from D-erythrose 4-phosphate: step 2/5. In terms of biological role, catalyzes the oxidation of erythronate-4-phosphate to 3-hydroxy-2-oxo-4-phosphonooxybutanoate. This Shewanella halifaxensis (strain HAW-EB4) protein is Erythronate-4-phosphate dehydrogenase.